Reading from the N-terminus, the 235-residue chain is Large ribosomal subunit protein uL1 (235 aa).

Belongs to the universal ribosomal protein uL1 family. As to quaternary structure, part of the 50S ribosomal subunit.

Functionally, binds directly to 23S rRNA. The L1 stalk is quite mobile in the ribosome, and is involved in E site tRNA release. In terms of biological role, protein L1 is also a translational repressor protein, it controls the translation of the L11 operon by binding to its mRNA. This is Large ribosomal subunit protein uL1 from Mycobacterium marinum (strain ATCC BAA-535 / M).